The chain runs to 280 residues: Phosphatidylinositol N-acetylglucosaminyltransferase GPI2 subunit (280 aa).

Residues Met1–Arg53 lie on the Cytoplasmic side of the membrane. The chain crosses the membrane as a helical span at residues Leu54–Thr74. Residue Tyr75 is a topological domain, extracellular. Residues Ile76 to Ile96 traverse the membrane as a helical segment. At Ile97–Ser108 the chain is on the cytoplasmic side. Residues Phe109–Leu129 form a helical membrane-spanning segment. The Extracellular portion of the chain corresponds to Lys130–Thr135. Residues Thr136–Ile156 form a helical membrane-spanning segment. The Cytoplasmic segment spans residues Ser157 to Asp189. A helical transmembrane segment spans residues Val190–Val210. The Extracellular segment spans residues Thr211–Asn220. A helical membrane pass occupies residues Ile221 to Phe241. Residues Ala242 to Asp280 are Cytoplasmic-facing.

It belongs to the PIGC family. Component of the phosphatidylinositol N-acetylglucosaminyltransferase (GPI-GlcNAc transferase) complex composed of at least GPI1, GPI2, GPI3, GPI15, GPI19 and ERI1. Interacts with ERI1.

The protein localises to the membrane. It carries out the reaction a 1,2-diacyl-sn-glycero-3-phospho-(1D-myo-inositol) + UDP-N-acetyl-alpha-D-glucosamine = a 6-(N-acetyl-alpha-D-glucosaminyl)-1-(1,2-diacyl-sn-glycero-3-phospho)-1D-myo-inositol + UDP + H(+). It functions in the pathway glycolipid biosynthesis; glycosylphosphatidylinositol-anchor biosynthesis. Functionally, part of the complex catalyzing the transfer of N-acetylglucosamine from UDP-N-acetylglucosamine to phosphatidylinositol, the first step of GPI biosynthesis. The sequence is that of Phosphatidylinositol N-acetylglucosaminyltransferase GPI2 subunit (GPI2) from Saccharomyces cerevisiae (strain ATCC 204508 / S288c) (Baker's yeast).